The sequence spans 273 residues: Glutamate 5-kinase (273 aa).

K15 contacts ATP. S55, D142, and N158 together coordinate substrate. ATP is bound by residues 178–179 (SD) and 220–226 (TGGMLSK).

It belongs to the glutamate 5-kinase family.

It is found in the cytoplasm. The catalysed reaction is L-glutamate + ATP = L-glutamyl 5-phosphate + ADP. It functions in the pathway amino-acid biosynthesis; L-proline biosynthesis; L-glutamate 5-semialdehyde from L-glutamate: step 1/2. Catalyzes the transfer of a phosphate group to glutamate to form L-glutamate 5-phosphate. This chain is Glutamate 5-kinase, found in Streptococcus pyogenes serotype M6 (strain ATCC BAA-946 / MGAS10394).